Consider the following 626-residue polypeptide: Chaperone protein HtpG (626 aa).

The interval methionine 1 to arginine 341 is a; substrate-binding. The segment at glutamate 342–lysine 552 is b. Residues isoleucine 553–serine 626 are c.

The protein belongs to the heat shock protein 90 family. Homodimer.

The protein resides in the cytoplasm. Its function is as follows. Molecular chaperone. Has ATPase activity. In Alkaliphilus metalliredigens (strain QYMF), this protein is Chaperone protein HtpG.